The chain runs to 611 residues: Dihydroxy-acid dehydratase (611 aa).

Asp81 lines the Mg(2+) pocket. Cys122 contacts [2Fe-2S] cluster. 2 residues coordinate Mg(2+): Asp123 and Lys124. Lys124 is subject to N6-carboxylysine. Cys195 is a [2Fe-2S] cluster binding site. Position 491 (Glu491) interacts with Mg(2+). Ser517 (proton acceptor) is an active-site residue.

This sequence belongs to the IlvD/Edd family. In terms of assembly, homodimer. The cofactor is [2Fe-2S] cluster. It depends on Mg(2+) as a cofactor.

The catalysed reaction is (2R)-2,3-dihydroxy-3-methylbutanoate = 3-methyl-2-oxobutanoate + H2O. It carries out the reaction (2R,3R)-2,3-dihydroxy-3-methylpentanoate = (S)-3-methyl-2-oxopentanoate + H2O. The protein operates within amino-acid biosynthesis; L-isoleucine biosynthesis; L-isoleucine from 2-oxobutanoate: step 3/4. It participates in amino-acid biosynthesis; L-valine biosynthesis; L-valine from pyruvate: step 3/4. In terms of biological role, functions in the biosynthesis of branched-chain amino acids. Catalyzes the dehydration of (2R,3R)-2,3-dihydroxy-3-methylpentanoate (2,3-dihydroxy-3-methylvalerate) into 2-oxo-3-methylpentanoate (2-oxo-3-methylvalerate) and of (2R)-2,3-dihydroxy-3-methylbutanoate (2,3-dihydroxyisovalerate) into 2-oxo-3-methylbutanoate (2-oxoisovalerate), the penultimate precursor to L-isoleucine and L-valine, respectively. The chain is Dihydroxy-acid dehydratase from Brucella canis (strain ATCC 23365 / NCTC 10854 / RM-666).